Consider the following 257-residue polypeptide: Nickel import system ATP-binding protein NikD (257 aa).

The ABC transporter domain maps to 4-245; that stretch reads IDIQNLTIKN…HLHPYTERLI (242 aa). 37-44 is a binding site for ATP; that stretch reads GESGAGKS.

The protein belongs to the ABC transporter superfamily. The complex is composed of two ATP-binding proteins (NikD and NikE), two transmembrane proteins (NikB and NikC) and a solute-binding protein (NikA).

Its subcellular location is the cell membrane. The catalysed reaction is Ni(2+)(out) + ATP + H2O = Ni(2+)(in) + ADP + phosphate + H(+). In terms of biological role, part of the ABC transporter complex NikABCDE (Opp2) involved in nickel import. Probably responsible for energy coupling to the transport system. In Staphylococcus aureus (strain MRSA252), this protein is Nickel import system ATP-binding protein NikD.